Reading from the N-terminus, the 52-residue chain is MQMKKCPKCGKYTLKEYCIDCNEKAGTVKPPRFSPVDKYGKYRRMLKKSLKK.

The protein belongs to the NOP10 family.

Functionally, involved in ribosome biogenesis; more specifically in 18S rRNA pseudouridylation and in cleavage of pre-rRNA. This chain is Ribosome biogenesis protein Nop10, found in Methanococcus vannielii (strain ATCC 35089 / DSM 1224 / JCM 13029 / OCM 148 / SB).